The primary structure comprises 276 residues: Type II pantothenate kinase (276 aa).

Position 8 to 15 (8 to 15 (DAGGTLTK)) interacts with ATP. Glutamate 76 functions as the Proton acceptor in the catalytic mechanism. Residues threonine 105, 127–131 (GGTIM), phenylalanine 143, and serine 230 contribute to the ATP site.

It belongs to the type II pantothenate kinase family. In terms of assembly, homodimer.

Its subcellular location is the cytoplasm. It catalyses the reaction (R)-pantothenate + ATP = (R)-4'-phosphopantothenate + ADP + H(+). It participates in cofactor biosynthesis; coenzyme A biosynthesis; CoA from (R)-pantothenate: step 1/5. In terms of biological role, catalyzes the phosphorylation of pantothenate (Pan), the first step in CoA biosynthesis. The polypeptide is Type II pantothenate kinase (Bacillus thuringiensis subsp. konkukian (strain 97-27)).